We begin with the raw amino-acid sequence, 855 residues long: Endochitinase 2 (855 aa).

A signal peptide spans 1-22 (MGPTNILAAFIAVSSLFIQSLA). Residues 29–340 (SNLAVYWGQG…DIMKEVLLRC (312 aa)) form the GH18 domain. An N-linked (GlcNAc...) asparagine glycan is attached at Asn-90. Glu-175 (proton donor) is an active-site residue. The disordered stretch occupies residues 341–672 (DPDPPTSTVT…APSSSTTEDR (332 aa)). The segment covering 346-400 (TSTVTSTTSASTSTQTSSQSTTMETKTLSASTTPSSPSTVSPSSTMQTTSTGSTS) has biased composition (low complexity). A compositionally biased stretch (polar residues) spans 401 to 456 (IETVTTRSQEPPSTTISTRSASTEPVTTRSQEPPSTTISTRSASTETVTTRSQEPP). Low complexity predominate over residues 457 to 483 (STTISTWSASTETSTSSQDSPSTTIST). Residues 484 to 521 (KSAPTGTVTTRSQDLPSTTISTRSPETETETATTKSQG) show a composition bias toward polar residues. Low complexity predominate over residues 522–533 (SPSITLSTRSSS). Residues 534 to 555 (AETVSTRSQHSSSTTISTKSAP) are compositionally biased toward polar residues. Residues 556–567 (TETGTTSEHSTS) are compositionally biased toward low complexity. Over residues 568–641 (MPVSTRSAST…SQTPTTIITG (74 aa)) the composition is skewed to polar residues. Low complexity-rich tracts occupy residues 642 to 652 (TPSDPVSAPTT) and 659 to 672 (TLTL…TEDR). Gly-826 carries GPI-anchor amidated glycine lipidation. The propeptide at 827–855 (SAMTVRSMDVVAKALITAGAAVLGLFLGL) is removed in mature form.

It belongs to the glycosyl hydrolase 18 family. Chitinase class III subfamily.

Its subcellular location is the cell membrane. The catalysed reaction is Random endo-hydrolysis of N-acetyl-beta-D-glucosaminide (1-&gt;4)-beta-linkages in chitin and chitodextrins.. Functionally, may be associated with endosporulation. The polypeptide is Endochitinase 2 (CTS2) (Coccidioides posadasii (strain C735) (Valley fever fungus)).